A 351-amino-acid chain; its full sequence is Deoxyguanosinetriphosphate triphosphohydrolase-like protein (351 aa).

The HD domain occupies 75–196 (RLTHTLEVAE…VRVADIIAYL (122 aa)).

It belongs to the dGTPase family. Type 2 subfamily.

This chain is Deoxyguanosinetriphosphate triphosphohydrolase-like protein, found in Desulfatibacillum aliphaticivorans.